We begin with the raw amino-acid sequence, 362 residues long: Caveolae-associated protein 4 (362 aa).

Positions 1–24 are disordered; it reads MEHNGSASNAGKIHQNRLSSVTED. A coiled-coil region spans residues 100-120; that stretch reads IKDVKARVEKQQVRVTKVETK. A phosphoserine mark is found at Ser-152, Ser-171, and Ser-172. The span at 227–255 shows a compositional bias: basic and acidic residues; sequence PERRERLRQSGERLRQSGERLRQSGERFK. Residues 227 to 261 form a disordered region; it reads PERRERLRQSGERLRQSGERLRQSGERFKKSISNA. Tyr-324 is subject to Phosphotyrosine. Thr-334 is modified (phosphothreonine). Phosphoserine is present on Ser-353.

The protein belongs to the CAVIN family. Component of the CAVIN complex composed of CAVIN1, CAVIN2, CAVIN3 and CAVIN4. Interacts with CAVIN1, CAV3, ADRA1A and ADRA1B. Interacts with CAVIN2; this augments the transactivation of NPPA. Interacts with MAPK1 and MAPK3. In terms of tissue distribution, expressed at much higher levels in cardiomyocytes than in non-cardiomyocytes.

It localises to the cytoplasm. The protein localises to the myofibril. Its subcellular location is the sarcomere. The protein resides in the cytosol. It is found in the cell membrane. It localises to the sarcolemma. The protein localises to the membrane. Its subcellular location is the caveola. In terms of biological role, modulates the morphology of formed caveolae in cardiomyocytes, but is not required for caveolar formation. Facilitates the recruitment of MAPK1/3 to caveolae within cardiomyocytes and regulates alpha-1 adrenergic receptor-induced hypertrophic responses in cardiomyocytes through MAPK1/3 activation. Contributes to proper membrane localization and stabilization of caveolin-3 (CAV3) in cardiomyocytes. Induces RHOA activation and activates NPPA transcription and myofibrillar organization through the Rho/ROCK signaling pathway. In Rattus norvegicus (Rat), this protein is Caveolae-associated protein 4.